A 58-amino-acid chain; its full sequence is DNA-binding protein (58 aa).

Composition is skewed to basic residues over residues 1–19 (MVRR…RSRS) and 28–58 (SRYR…NQYI). The disordered stretch occupies residues 1–58 (MVRRRRSRSPYRRRSRSRSRSGSDRSRSRYRSRSRSRSRSRSRARSRSPYHHHINQYI).

Post-translationally, probably phosphorylated in infected cells.

The protein localises to the virion. In terms of biological role, thought to be responsible for DNA condensation during packaging of the nucleocapsids. The protein is DNA-binding protein (P7.3) of Cryptophlebia leucotreta granulosis virus (ClGV).